The primary structure comprises 285 residues: 2,3,4,5-tetrahydropyridine-2,6-dicarboxylate N-succinyltransferase (285 aa).

Substrate contacts are provided by arginine 111 and aspartate 148.

It belongs to the transferase hexapeptide repeat family. In terms of assembly, homotrimer.

It is found in the cytoplasm. The enzyme catalyses (S)-2,3,4,5-tetrahydrodipicolinate + succinyl-CoA + H2O = (S)-2-succinylamino-6-oxoheptanedioate + CoA. Its pathway is amino-acid biosynthesis; L-lysine biosynthesis via DAP pathway; LL-2,6-diaminopimelate from (S)-tetrahydrodipicolinate (succinylase route): step 1/3. This is 2,3,4,5-tetrahydropyridine-2,6-dicarboxylate N-succinyltransferase from Rhizobium rhizogenes (strain K84 / ATCC BAA-868) (Agrobacterium radiobacter).